A 368-amino-acid chain; its full sequence is DNA replication and repair protein RecF (368 aa).

An ATP-binding site is contributed by 30-37 (GNNAQGKT).

The protein belongs to the RecF family.

It localises to the cytoplasm. In terms of biological role, the RecF protein is involved in DNA metabolism; it is required for DNA replication and normal SOS inducibility. RecF binds preferentially to single-stranded, linear DNA. It also seems to bind ATP. This Streptococcus pyogenes serotype M4 (strain MGAS10750) protein is DNA replication and repair protein RecF.